Here is a 317-residue protein sequence, read N- to C-terminus: Probable RuBisCO transcriptional regulator (317 aa).

One can recognise an HTH lysR-type domain in the interval 6–63; sequence FTLDQLRILRAILIQGSFKKAATSLYISQPAVSSHVHNIEKQLNIQLFDRSHRNAQLT. Positions 23–42 form a DNA-binding region, H-T-H motif; it reads FKKAATSLYISQPAVSSHVH.

It belongs to the LysR transcriptional regulatory family.

The protein localises to the plastid. It is found in the chloroplast. Its function is as follows. Trans-acting transcriptional regulator of RuBisCO genes (rbcL and rbcS) expression. The protein is Probable RuBisCO transcriptional regulator (rbcR) of Cyanidium caldarium (Red alga).